A 163-amino-acid polypeptide reads, in one-letter code: 2-C-methyl-D-erythritol 2,4-cyclodiphosphate synthase (163 aa).

The a divalent metal cation site is built by Asp-8 and His-10. Residues 8 to 10 (DVH) and 34 to 35 (HS) contribute to the 4-CDP-2-C-methyl-D-erythritol 2-phosphate site. An a divalent metal cation-binding site is contributed by His-42. 4-CDP-2-C-methyl-D-erythritol 2-phosphate-binding positions include 56-58 (DIG), 132-135 (TTTE), Phe-139, and Arg-142.

This sequence belongs to the IspF family. In terms of assembly, homotrimer. It depends on a divalent metal cation as a cofactor.

The enzyme catalyses 4-CDP-2-C-methyl-D-erythritol 2-phosphate = 2-C-methyl-D-erythritol 2,4-cyclic diphosphate + CMP. The protein operates within isoprenoid biosynthesis; isopentenyl diphosphate biosynthesis via DXP pathway; isopentenyl diphosphate from 1-deoxy-D-xylulose 5-phosphate: step 4/6. In terms of biological role, involved in the biosynthesis of isopentenyl diphosphate (IPP) and dimethylallyl diphosphate (DMAPP), two major building blocks of isoprenoid compounds. Catalyzes the conversion of 4-diphosphocytidyl-2-C-methyl-D-erythritol 2-phosphate (CDP-ME2P) to 2-C-methyl-D-erythritol 2,4-cyclodiphosphate (ME-CPP) with a corresponding release of cytidine 5-monophosphate (CMP). This Moorella thermoacetica (strain ATCC 39073 / JCM 9320) protein is 2-C-methyl-D-erythritol 2,4-cyclodiphosphate synthase.